We begin with the raw amino-acid sequence, 203 residues long: Urease accessory protein UreG (203 aa).

A GTP-binding site is contributed by 14–21 (GPVGSGKT).

Belongs to the SIMIBI class G3E GTPase family. UreG subfamily. In terms of assembly, homodimer. UreD, UreF and UreG form a complex that acts as a GTP-hydrolysis-dependent molecular chaperone, activating the urease apoprotein by helping to assemble the nickel containing metallocenter of UreC. The UreE protein probably delivers the nickel.

The protein resides in the cytoplasm. In terms of biological role, facilitates the functional incorporation of the urease nickel metallocenter. This process requires GTP hydrolysis, probably effectuated by UreG. The protein is Urease accessory protein UreG of Rhizobium rhizogenes (strain K84 / ATCC BAA-868) (Agrobacterium radiobacter).